Reading from the N-terminus, the 202-residue chain is Peptidyl-tRNA hydrolase (202 aa).

Y19 provides a ligand contact to tRNA. The active-site Proton acceptor is H24. Residues Y70, N72, and N118 each contribute to the tRNA site.

The protein belongs to the PTH family. As to quaternary structure, monomer.

The protein resides in the cytoplasm. The catalysed reaction is an N-acyl-L-alpha-aminoacyl-tRNA + H2O = an N-acyl-L-amino acid + a tRNA + H(+). Hydrolyzes ribosome-free peptidyl-tRNAs (with 1 or more amino acids incorporated), which drop off the ribosome during protein synthesis, or as a result of ribosome stalling. Its function is as follows. Catalyzes the release of premature peptidyl moieties from peptidyl-tRNA molecules trapped in stalled 50S ribosomal subunits, and thus maintains levels of free tRNAs and 50S ribosomes. This is Peptidyl-tRNA hydrolase from Prochlorococcus marinus (strain NATL1A).